The chain runs to 117 residues: G antigen 12B/C/D/E (117 aa).

The tract at residues 1-117 (MSWRGRSTYY…PEEGEKQSQC (117 aa)) is disordered. Composition is skewed to acidic residues over residues 32-45 (FSDE…EEGE) and 87-96 (ECEDGPDGQE). Basic and acidic residues predominate over residues 103–117 (EEVKTPEEGEKQSQC).

The protein belongs to the GAGE family.

The polypeptide is G antigen 12B/C/D/E (GAGE12B) (Homo sapiens (Human)).